The sequence spans 401 residues: Imidazolonepropionase (401 aa).

Fe(3+) contacts are provided by His-66 and His-68. Zn(2+) is bound by residues His-66 and His-68. Arg-75, Tyr-138, and His-171 together coordinate 4-imidazolone-5-propanoate. An N-formimidoyl-L-glutamate-binding site is contributed by Tyr-138. His-236 provides a ligand contact to Fe(3+). Residue His-236 participates in Zn(2+) binding. Gln-239 is a 4-imidazolone-5-propanoate binding site. Residue Asp-311 coordinates Fe(3+). A Zn(2+)-binding site is contributed by Asp-311. 2 residues coordinate N-formimidoyl-L-glutamate: Asn-313 and Gly-315. 4-imidazolone-5-propanoate is bound at residue Thr-316.

This sequence belongs to the metallo-dependent hydrolases superfamily. HutI family. The cofactor is Zn(2+). Fe(3+) serves as cofactor.

The protein resides in the cytoplasm. It carries out the reaction 4-imidazolone-5-propanoate + H2O = N-formimidoyl-L-glutamate. The protein operates within amino-acid degradation; L-histidine degradation into L-glutamate; N-formimidoyl-L-glutamate from L-histidine: step 3/3. Catalyzes the hydrolytic cleavage of the carbon-nitrogen bond in imidazolone-5-propanoate to yield N-formimidoyl-L-glutamate. It is the third step in the universal histidine degradation pathway. This Pseudomonas savastanoi pv. phaseolicola (strain 1448A / Race 6) (Pseudomonas syringae pv. phaseolicola (strain 1448A / Race 6)) protein is Imidazolonepropionase.